Reading from the N-terminus, the 262-residue chain is Type III pantothenate kinase (262 aa).

An ATP-binding site is contributed by 9–16 (DAGNSRIK). Substrate is bound by residues Tyr-96 and 103 to 106 (GSDR). Asp-105 functions as the Proton acceptor in the catalytic mechanism. Thr-129 is a binding site for ATP. Residue Thr-189 participates in substrate binding.

Belongs to the type III pantothenate kinase family. As to quaternary structure, homodimer. It depends on NH4(+) as a cofactor. Requires K(+) as cofactor.

The protein resides in the cytoplasm. The enzyme catalyses (R)-pantothenate + ATP = (R)-4'-phosphopantothenate + ADP + H(+). Its pathway is cofactor biosynthesis; coenzyme A biosynthesis; CoA from (R)-pantothenate: step 1/5. In terms of biological role, catalyzes the phosphorylation of pantothenate (Pan), the first step in CoA biosynthesis. This chain is Type III pantothenate kinase, found in Burkholderia multivorans (strain ATCC 17616 / 249).